The chain runs to 541 residues: uncharacterized protein (541 aa).

The protein localises to the virion. This is an uncharacterized protein from Acanthamoeba polyphaga mimivirus (APMV).